Consider the following 798-residue polypeptide: Transferrin receptor protein 2 (798 aa).

At 1–81 (MEQRWGLLRK…WAAAGRKAAP (81 aa)) the chain is on the cytoplasmic side. The short motif at 23-26 (YRRV) is the Endocytosis signal element. A disordered region spans residues 25 to 44 (RVEGPQLENLEEEDREEGEE). Residues 33 to 44 (NLEEEDREEGEE) show a composition bias toward acidic residues. A helical; Signal-anchor for type II membrane protein membrane pass occupies residues 82–102 (YLVLTTLLIFTGAFLLGYVAF). The Extracellular segment spans residues 103-798 (RGSCQACGDS…GDVWNIDNNF (696 aa)). Residues asparagine 235, asparagine 334, and asparagine 535 are each glycosylated (N-linked (GlcNAc...) asparagine).

This sequence belongs to the peptidase M28 family. M28B subfamily. In terms of assembly, homodimer.

It is found in the cell membrane. In terms of biological role, mediates cellular uptake of transferrin-bound iron in a non-iron dependent manner. May be involved in iron metabolism, hepatocyte function and erythrocyte differentiation. The chain is Transferrin receptor protein 2 (Tfr2) from Rattus norvegicus (Rat).